Reading from the N-terminus, the 271-residue chain is Phosphate import ATP-binding protein PstB (271 aa).

Residues 24 to 266 (MIGKDVSVYY…PDDQRTQDYI (243 aa)) enclose the ABC transporter domain. 56-63 (GPSGCGKS) lines the ATP pocket.

This sequence belongs to the ABC transporter superfamily. Phosphate importer (TC 3.A.1.7) family. The complex is composed of two ATP-binding proteins (PstB), two transmembrane proteins (PstC and PstA) and a solute-binding protein (PstS).

It localises to the cell inner membrane. It carries out the reaction phosphate(out) + ATP + H2O = ADP + 2 phosphate(in) + H(+). Its function is as follows. Part of the ABC transporter complex PstSACB involved in phosphate import. Responsible for energy coupling to the transport system. This is Phosphate import ATP-binding protein PstB from Agrobacterium fabrum (strain C58 / ATCC 33970) (Agrobacterium tumefaciens (strain C58)).